The following is a 164-amino-acid chain: SsrA-binding protein (164 aa).

Belongs to the SmpB family.

It localises to the cytoplasm. In terms of biological role, required for rescue of stalled ribosomes mediated by trans-translation. Binds to transfer-messenger RNA (tmRNA), required for stable association of tmRNA with ribosomes. tmRNA and SmpB together mimic tRNA shape, replacing the anticodon stem-loop with SmpB. tmRNA is encoded by the ssrA gene; the 2 termini fold to resemble tRNA(Ala) and it encodes a 'tag peptide', a short internal open reading frame. During trans-translation Ala-aminoacylated tmRNA acts like a tRNA, entering the A-site of stalled ribosomes, displacing the stalled mRNA. The ribosome then switches to translate the ORF on the tmRNA; the nascent peptide is terminated with the 'tag peptide' encoded by the tmRNA and targeted for degradation. The ribosome is freed to recommence translation, which seems to be the essential function of trans-translation. This is SsrA-binding protein from Shewanella sediminis (strain HAW-EB3).